Consider the following 481-residue polypeptide: Dual specificity protein kinase CLK4 (481 aa).

2 disordered regions span residues Met-1–His-47 and Ser-102–Glu-143. Residues His-8–Gly-19 are compositionally biased toward basic and acidic residues. Basic residues-rich tracts occupy residues Val-106–Arg-119 and Ser-126–Ser-136. Phosphoserine is present on residues Ser-136 and Ser-138. In terms of domain architecture, Protein kinase spans Tyr-159 to Phe-475. Residues Leu-165 to Val-173 and Lys-189 contribute to the ATP site. Asp-286 serves as the catalytic Proton acceptor.

The protein belongs to the protein kinase superfamily. CMGC Ser/Thr protein kinase family. Lammer subfamily. In terms of assembly, interacts with UBL5. In terms of processing, autophosphorylates on all three types of residues. As to expression, expressed in the hippocampus, the cerebellum and the olfactory bulb.

It localises to the nucleus. It carries out the reaction L-seryl-[protein] + ATP = O-phospho-L-seryl-[protein] + ADP + H(+). The catalysed reaction is L-threonyl-[protein] + ATP = O-phospho-L-threonyl-[protein] + ADP + H(+). The enzyme catalyses L-tyrosyl-[protein] + ATP = O-phospho-L-tyrosyl-[protein] + ADP + H(+). Its activity is regulated as follows. TG003 inhibits its kinase activity and affects the regulation of alternative splicing mediated by phosphorylation of SR proteins. Functionally, dual specificity kinase acting on both serine/threonine and tyrosine-containing substrates. Phosphorylates serine- and arginine-rich (SR) proteins of the spliceosomal complex and may be a constituent of a network of regulatory mechanisms that enable SR proteins to control RNA splicing. Phosphorylates SRSF1 and SRSF3. Required for the regulation of alternative splicing of MAPT/TAU. Regulates the alternative splicing of tissue factor (F3) pre-mRNA in endothelial cells. In Mus musculus (Mouse), this protein is Dual specificity protein kinase CLK4 (Clk4).